The sequence spans 1835 residues: Protein TIC 214 (1835 aa).

6 consecutive transmembrane segments (helical) span residues 25 to 45 (VGLYYGFLTTFSIGPSYLFLL), 64 to 84 (FITGQLMMFISIYYAPLHLAL), 87 to 107 (PHTITVLVLPYLLFHFFWNNH), 124 to 144 (LSIQCVFLNNLIFQLFNHFIL), 172 to 192 (VGWLIGHIFFMKWVGLVLFWI), and 221 to 241 (IFSILLFITCVYYLGRIPSPI). A compositionally biased stretch (basic and acidic residues) spans 246–258 (LKETSETEERGES). Disordered stretches follow at residues 246–304 (LKET…DGNQ), 735–759 (EFKTSDSEEKEAKEKEKTKEEKKEE), and 1535–1578 (NRNQ…KRQS). A compositionally biased stretch (acidic residues) spans 259–268 (AEETDVEIET). Residues 1553–1569 (PRNRQKDLEKDYAESDI) are compositionally biased toward basic and acidic residues.

The protein belongs to the TIC214 family. As to quaternary structure, part of the Tic complex.

The protein localises to the plastid. Its subcellular location is the chloroplast inner membrane. In terms of biological role, involved in protein precursor import into chloroplasts. May be part of an intermediate translocation complex acting as a protein-conducting channel at the inner envelope. This is Protein TIC 214 from Liriodendron tulipifera (Tuliptree).